The chain runs to 177 residues: Isopentenyl-diphosphate Delta-isomerase (177 aa).

Residues His22 and His28 each contribute to the Mn(2+) site. Residues 26–160 enclose the Nudix hydrolase domain; the sequence is LRHMAISVFV…PERFTPWLRI (135 aa). Cys62 is a catalytic residue. His64 serves as a coordination point for Mn(2+). Residue Glu82 coordinates Mg(2+). Positions 108 and 110 each coordinate Mn(2+). Glu110 is an active-site residue.

This sequence belongs to the IPP isomerase type 1 family. Requires Mg(2+) as cofactor. The cofactor is Mn(2+).

It localises to the cytoplasm. The catalysed reaction is isopentenyl diphosphate = dimethylallyl diphosphate. Its pathway is isoprenoid biosynthesis; dimethylallyl diphosphate biosynthesis; dimethylallyl diphosphate from isopentenyl diphosphate: step 1/1. It functions in the pathway porphyrin-containing compound metabolism; chlorophyll biosynthesis. Functionally, catalyzes the 1,3-allylic rearrangement of the homoallylic substrate isopentenyl (IPP) to its highly electrophilic allylic isomer, dimethylallyl diphosphate (DMAPP). This Cereibacter sphaeroides (strain ATCC 17029 / ATH 2.4.9) (Rhodobacter sphaeroides) protein is Isopentenyl-diphosphate Delta-isomerase.